Here is a 66-residue protein sequence, read N- to C-terminus: Large ribosomal subunit protein bL33c (66 aa).

Belongs to the bacterial ribosomal protein bL33 family.

Its subcellular location is the plastid. The protein resides in the chloroplast. This is Large ribosomal subunit protein bL33c from Saccharum officinarum (Sugarcane).